We begin with the raw amino-acid sequence, 712 residues long: Integrator complex subunit 9 homolog (712 aa).

The segment covering 47–70 (NNNNNNNNNNNNNNNNNNNNNNNN) has biased composition (low complexity). The tract at residues 47 to 73 (NNNNNNNNNNNNNNNNNNNNNNNNSYS) is disordered.

The protein belongs to the metallo-beta-lactamase superfamily. RNA-metabolizing metallo-beta-lactamase-like family. INTS9 subfamily. Component of the Integrator complex. The core complex associates with protein phosphatase 2A subunits, to form the Integrator-PP2A (INTAC) complex.

The protein resides in the nucleus. The protein localises to the cytoplasm. Functionally, component of the integrator complex, a multiprotein complex that terminates RNA polymerase II (Pol II) transcription in the promoter-proximal region of genes. The integrator complex provides a quality checkpoint during transcription elongation by driving premature transcription termination of transcripts that are unfavorably configured for transcriptional elongation: the complex terminates transcription by (1) catalyzing dephosphorylation of the C-terminal domain (CTD) of Pol II subunit polr2a, (2) degrading the exiting nascent RNA transcript via endonuclease activity and (3) promoting the release of Pol II from bound DNA. The integrator complex is also involved in terminating the synthesis of non-coding Pol II transcripts, such as enhancer RNAs (eRNAs), small nuclear RNAs (snRNAs), telomerase RNAs and long non-coding RNAs (lncRNAs). This is Integrator complex subunit 9 homolog (ints9) from Dictyostelium discoideum (Social amoeba).